The sequence spans 130 residues: Iron-sulfur cluster insertion protein ErpA (130 aa).

Iron-sulfur cluster is bound by residues Cys58, Cys122, and Cys124.

This sequence belongs to the HesB/IscA family. In terms of assembly, homodimer. Iron-sulfur cluster is required as a cofactor.

Functionally, required for insertion of 4Fe-4S clusters for at least IspG. The polypeptide is Iron-sulfur cluster insertion protein ErpA (Stenotrophomonas maltophilia (strain R551-3)).